The following is a 261-amino-acid chain: Proteasome assembly chaperone 2 (261 aa).

This sequence belongs to the PSMG2 family. As to quaternary structure, forms a heterodimer with psmg1. Degraded by the proteasome upon completion of 20S proteasome maturation.

Its subcellular location is the nucleus. In terms of biological role, chaperone protein which promotes assembly of the 20S proteasome as part of a heterodimer with psmg1. The sequence is that of Proteasome assembly chaperone 2 from Xenopus tropicalis (Western clawed frog).